A 203-amino-acid polypeptide reads, in one-letter code: Membrane-spanning 4-domains subfamily A member 13 (203 aa).

4 consecutive transmembrane segments (helical) span residues 15–35, 56–76, 84–104, and 141–161; these read VLGV…YFLL, MGTS…VKAA, ILCT…AASL, and FAIA…SSIV.

It belongs to the MS4A family.

It localises to the membrane. Functionally, may be involved in signal transduction as a component of a multimeric receptor complex. This Mus musculus (Mouse) protein is Membrane-spanning 4-domains subfamily A member 13 (Ms4a13).